Here is a 1217-residue protein sequence, read N- to C-terminus: DNA-directed RNA polymerase subunit beta' (1217 aa).

Positions 60, 62, 75, and 78 each coordinate Zn(2+). Residues D449, D451, and D453 each coordinate Mg(2+). Positions 821, 895, 902, and 905 each coordinate Zn(2+).

This sequence belongs to the RNA polymerase beta' chain family. The RNAP catalytic core consists of 2 alpha, 1 beta, 1 beta' and 1 omega subunit. When a sigma factor is associated with the core the holoenzyme is formed, which can initiate transcription. Mg(2+) is required as a cofactor. The cofactor is Zn(2+).

It catalyses the reaction RNA(n) + a ribonucleoside 5'-triphosphate = RNA(n+1) + diphosphate. DNA-dependent RNA polymerase catalyzes the transcription of DNA into RNA using the four ribonucleoside triphosphates as substrates. The sequence is that of DNA-directed RNA polymerase subunit beta' from Lactobacillus acidophilus (strain ATCC 700396 / NCK56 / N2 / NCFM).